Here is an 87-residue protein sequence, read N- to C-terminus: Phosphoribosyl-ATP pyrophosphatase (87 aa).

This sequence belongs to the PRA-PH family.

It is found in the cytoplasm. It catalyses the reaction 1-(5-phospho-beta-D-ribosyl)-ATP + H2O = 1-(5-phospho-beta-D-ribosyl)-5'-AMP + diphosphate + H(+). The protein operates within amino-acid biosynthesis; L-histidine biosynthesis; L-histidine from 5-phospho-alpha-D-ribose 1-diphosphate: step 2/9. This chain is Phosphoribosyl-ATP pyrophosphatase, found in Nocardia farcinica (strain IFM 10152).